The chain runs to 423 residues: MSIQIPRGTQDILPGTVELWQYIEGQAREICRRYNYKEIRTPIFEHTELFLRGVGDTTDIVQKEMYSFQDRGERSLTLRPEGTAPVVRSYVENKMFGDATQPTKLYYIGQMFRYERPQAGRYRQFVQFGIEAIGSNDPAIDAEVIALAVEFYRGMGLKNIKVVLNSLGDAASRQAHRDALIAHFEPRIGEFCSDCQSRLEKNPLRILDCKKDRNHELMGTAPSITEYLNEDSAVYYEKVQELLTMMDVPFEKDPNLVRGLDYYQHTVFEIMSEAEGFGAITTLSGGGRYNGLVQEIGGPEMPGIGFAMSIERLIMALKAENIELPIEHSIDCYVVALGEKAKDHAAKVAFDLRKAGLSVEKDYLDRKMKAQFKSADRLKAKFVAVLGEDELDKGIINLKDMATGEQEEVALDVFASYVAEKLI.

It belongs to the class-II aminoacyl-tRNA synthetase family. Homodimer.

Its subcellular location is the cytoplasm. The enzyme catalyses tRNA(His) + L-histidine + ATP = L-histidyl-tRNA(His) + AMP + diphosphate + H(+). The chain is Histidine--tRNA ligase 2 from Bacillus cereus (strain ATCC 10987 / NRS 248).